A 795-amino-acid polypeptide reads, in one-letter code: uncharacterized protein (795 aa).

The stretch at 228–280 (NIICFKNKCKNNEKEKKEEEEDHDHDHDDKKKEKEDKEKEEEEEEEDSNDDFE) forms a coiled coil. 4 disordered regions span residues 242–278 (EKKE…SNDD), 326–430 (TTTT…TPNR), 455–484 (INQQ…KSEP), and 673–743 (NNNN…NENE). The segment covering 251–264 (DHDHDDKKKEKEDK) has biased composition (basic and acidic residues). Acidic residues predominate over residues 265 to 278 (EKEEEEEEEDSNDD). Residues 326–345 (TTTTTVNGSKNSSNTTTPIT) are compositionally biased toward low complexity. Acidic residues predominate over residues 362–373 (DDDDDDDLTDED). The segment covering 377–398 (HNEIYSTSPKVSHSTFCQSSPT) has biased composition (polar residues). Low complexity-rich tracts occupy residues 399-414 (LLDL…QQQQ), 455-480 (INQQ…SSNI), and 673-729 (NNNN…NQNE). Residues 732–743 (NENKNENENENE) are compositionally biased toward basic and acidic residues.

This is an uncharacterized protein from Dictyostelium discoideum (Social amoeba).